The primary structure comprises 276 residues: Formamidopyrimidine-DNA glycosylase (276 aa).

The active-site Schiff-base intermediate with DNA is P2. E3 functions as the Proton donor in the catalytic mechanism. The active-site Proton donor; for beta-elimination activity is the K60. DNA is bound by residues H93, R112, and R155. The FPG-type zinc finger occupies 240-274 (LVYGRKDEACTKCGAEIIRFVVGGRGTHICPDCQK). Residue R264 is the Proton donor; for delta-elimination activity of the active site.

It belongs to the FPG family. Monomer. Zn(2+) is required as a cofactor.

The enzyme catalyses Hydrolysis of DNA containing ring-opened 7-methylguanine residues, releasing 2,6-diamino-4-hydroxy-5-(N-methyl)formamidopyrimidine.. The catalysed reaction is 2'-deoxyribonucleotide-(2'-deoxyribose 5'-phosphate)-2'-deoxyribonucleotide-DNA = a 3'-end 2'-deoxyribonucleotide-(2,3-dehydro-2,3-deoxyribose 5'-phosphate)-DNA + a 5'-end 5'-phospho-2'-deoxyribonucleoside-DNA + H(+). In terms of biological role, involved in base excision repair of DNA damaged by oxidation or by mutagenic agents. Acts as a DNA glycosylase that recognizes and removes damaged bases. Has a preference for oxidized purines, such as 7,8-dihydro-8-oxoguanine (8-oxoG). Has AP (apurinic/apyrimidinic) lyase activity and introduces nicks in the DNA strand. Cleaves the DNA backbone by beta-delta elimination to generate a single-strand break at the site of the removed base with both 3'- and 5'-phosphates. The chain is Formamidopyrimidine-DNA glycosylase from Brevibacillus brevis (strain 47 / JCM 6285 / NBRC 100599).